The following is a 424-amino-acid chain: Splicing factor 3B subunit 4 (424 aa).

Position 2 is an N-acetylalanine (alanine 2). RRM domains are found at residues 13 to 91 (ATVY…KASA) and 100 to 179 (ANIF…YAFK). Tyrosine 56 is subject to Phosphotyrosine. A disordered region spans residues 207–424 (PHQLFADAPP…RGPLRGPLPQ (218 aa)). Low complexity predominate over residues 222–231 (NPVVSSLGSG). Positions 232 to 268 (LPPPGMPPPGSFPPPVPPPGALPPGIPPAMPPPPMPP) are enriched in pro residues. Composition is skewed to low complexity over residues 269 to 280 (GAAGHGPPSAGT) and 303 to 323 (HPGMSQMQLAHHGPHGLGHPH). 2 stretches are compositionally biased toward pro residues: residues 332-381 (QPPP…PLMP) and 388-424 (PPRPPPYGYQRGPLPPPRPTPRPPVPPRGPLRGPLPQ).

Belongs to the SF3B4 family. As to quaternary structure, component of the 17S U2 SnRNP complex, a ribonucleoprotein complex that contains small nuclear RNA (snRNA) U2 and a number of specific proteins. Part of the SF3B subcomplex of the 17S U2 SnRNP complex. SF3B associates with the splicing subcomplex SF3A and a 12S RNA unit to form the U2 small nuclear ribonucleoproteins complex (U2 snRNP). SF3B4 has been found in complex spliceosome 'B' and 'C' as well. Component of the minor (U12-type spliceosome) spliceosome. Found in a complex with PRMT9, SF3B2 and SF3B4.

It is found in the nucleus. Functionally, component of the 17S U2 SnRNP complex of the spliceosome, a large ribonucleoprotein complex that removes introns from transcribed pre-mRNAs. The 17S U2 SnRNP complex (1) directly participates in early spliceosome assembly and (2) mediates recognition of the intron branch site during pre-mRNA splicing by promoting the selection of the pre-mRNA branch-site adenosine, the nucleophile for the first step of splicing. Within the 17S U2 SnRNP complex, SF3B4 is part of the SF3B subcomplex, which is required for 'A' complex assembly formed by the stable binding of U2 snRNP to the branchpoint sequence in pre-mRNA. Sequence independent binding of SF3A and SF3B subcomplexes upstream of the branch site is essential, it may anchor U2 snRNP to the pre-mRNA. May also be involved in the assembly of the 'E' complex. Also acts as a component of the minor spliceosome, which is involved in the splicing of U12-type introns in pre-mRNAs. This is Splicing factor 3B subunit 4 (SF3B4) from Homo sapiens (Human).